Reading from the N-terminus, the 1688-residue chain is Voltage-dependent L-type calcium channel subunit alpha-1S (1688 aa).

The tract at residues 1–24 (MDAMGSAAEEGTQKKKRRPLVPPP) is disordered. At 1–51 (MDAMGSAAEEGTQKKKRRPLVPPPPRPPRALFCLGLQNPFRKFCINIVEWK) the chain is on the cytoplasmic side. The I repeat unit spans residues 38-335 (NPFRKFCINI…LVLGVLSGEF (298 aa)). The chain crosses the membrane as a helical span at residues 52–70 (PFEMIILLTIFANCVALAI). Residues 71-88 (FLPMPEDDTNSTNSVLEK) are Extracellular-facing. An N-linked (GlcNAc...) asparagine glycan is attached at asparagine 80. A helical transmembrane segment spans residues 89-108 (VEYIFLFIFTIESFLKIVAY). Topologically, residues 109 to 120 (GFILHTDAYLRN) are cytoplasmic. Residues 121 to 139 (GWNILDFTIVSVGVFSVLL) traverse the membrane as a helical segment. Residues 140–158 (EQISKLQGLPAPGKSSGFN) are Extracellular-facing. Residues 159–177 (VKALRAFRVLRPLRLVSGV) form a helical membrane-spanning segment. Residues 178–196 (PSLQVVLNSIIKAMIPLLH) lie on the Cytoplasmic side of the membrane. Residues 197–216 (IALLVLFMIIIYAIVGLELF) traverse the membrane as a helical segment. The Extracellular portion of the chain corresponds to 217-307 (SGKMHKTCYF…WVNDAIGNEW (91 aa)). A glycan (N-linked (GlcNAc...) asparagine) is linked at asparagine 255. Position 290 (glutamate 290) interacts with Ca(2+). Residues 308 to 332 (PWIYFVSLILLGSFFVLNLVLGVLS) form a helical membrane-spanning segment. The Cytoplasmic segment spans residues 333 to 431 (GEFTKEREKA…RKSRDLVKSR (99 aa)). Positions 355–372 (QAMDEDLRGYLDWITHAE) are binding to the beta subunit. The II repeat unit spans residues 417–663 (HRLLRRKSRD…VFLAIAVDNL (247 aa)). Residues 432–450 (FFYWLVIIIILLNTVIIAT) traverse the membrane as a helical segment. The Extracellular portion of the chain corresponds to 451 to 465 (EHHHQPDSLTKAQDI). The chain crosses the membrane as a helical span at residues 466–485 (ANEVLLALFTMEMIVKIYAL). At 486 to 493 (GFQSYFMS) the chain is on the cytoplasmic side. The chain crosses the membrane as a helical span at residues 494 to 512 (LFNRFDSFVVCTGLLEVML). The Extracellular portion of the chain corresponds to 513–522 (VASDIMSPLG). The helical transmembrane segment at 523-541 (ISVLRCIRLLRIFKITRYW) threads the bilayer. Topologically, residues 542 to 560 (TSLNNLVASLLNSVRSIAS) are cytoplasmic. Residues 561–580 (LLLLLFLFMIIFALLGMQMF) traverse the membrane as a helical segment. The Extracellular segment spans residues 581–635 (GGKFDFEDLEVRRSTFDTFPQALITVFQILTGEDWTAVMYNGIMAYGGPTYSGMS). Glutamate 613 serves as a coordination point for Ca(2+). Residues 636 to 660 (VCIYFIILFVCGNYILLNVFLAIAV) traverse the membrane as a helical segment. Topologically, residues 661–797 (DNLAEAENLT…VLCHRIINAT (137 aa)) are cytoplasmic. Disordered regions lie at residues 672-696 (AQKA…TEEE) and 729-755 (EIKD…ISPR). The span at 740 to 749 (PGDDEEEEPE) shows a compositional bias: acidic residues. An III repeat occupies 784–1066 (NKIRVLCHRI…IFVGFVIVTF (283 aa)). A helical membrane pass occupies residues 798-816 (TFTNFILLFILLSSISLAA). At 817-832 (EDPIQPESFRNKVLSK) the chain is on the extracellular side. The helical transmembrane segment at 833-852 (LDIVFTVIFTTEIVLKMTAY) threads the bilayer. Over 853–864 (GAFLHKGSFCRN) the chain is Cytoplasmic. Residues 865 to 883 (SFNILDLSVVGVSLISMGI) traverse the membrane as a helical segment. At 884 to 890 (ESSAISV) the chain is on the extracellular side. A helical membrane pass occupies residues 891–909 (VKILRVLRVLRPLRAINRA). At 910–928 (KGLKHVVQCLFVAIKTIGN) the chain is on the cytoplasmic side. The chain crosses the membrane as a helical span at residues 929–948 (IVLVTTLLQFMFSCIGVQLF). Over 949–1038 (KGKFYSCTDT…MGPIYNYRIE (90 aa)) the chain is Extracellular. Positions 986 to 1075 (RVWSHSDFHF…FQEQGEQEYK (90 aa)) are dihydropyridine binding. Ca(2+) is bound at residue glutamate 1012. The chain crosses the membrane as a helical span at residues 1039–1063 (IAVFFIVYIILIAFFMMNIFVGFVI). Residues 1064-1116 (VTFQEQGEQEYKDCELDKNQRQCVQYALKARPLRRYIPKNPHQYKIWYVVTSS) lie on the Cytoplasmic side of the membrane. An IV repeat occupies 1103–1371 (NPHQYKIWYV…LFVAVIMDNF (269 aa)). A helical membrane pass occupies residues 1117–1135 (YFEYLMFFLITLNTISLGM). Over 1136–1150 (QHYGQTAEFSYMSDI) the chain is Extracellular. A helical membrane pass occupies residues 1151–1170 (LNVAFTGIFTVEMFLKLAAF). Residues 1171–1178 (KAKGYFGD) lie on the Cytoplasmic side of the membrane. The helical transmembrane segment at 1179-1197 (PWNVFDFLIVIGSVIDVIL) threads the bilayer. Over 1198-1218 (SEIDTPGIPATPGAEESSRIS) the chain is Extracellular. A helical membrane pass occupies residues 1219 to 1237 (ITFFRLFRVLRLVKLLSRG). Residues 1238–1256 (EGVRTLLWTFIKSFQALPY) lie on the Cytoplasmic side of the membrane. The chain crosses the membrane as a helical span at residues 1257–1276 (VALLIVMLFFIYAVIGMQVF). At 1277-1343 (GKIALVDGTH…GEEYTCGTSF (67 aa)) the chain is on the extracellular side. The interval 1324 to 1390 (LCDPMSDFQP…LGPHHLDEFK (67 aa)) is dihydropyridine binding. Positions 1336–1379 (EYTCGTSFAYFYFISFYMLCAFLIINLFVAVIMDNFDYLTRDWS) are phenylalkylamine binding. A helical transmembrane segment spans residues 1344–1368 (AYFYFISFYMLCAFLIINLFVAVIM). Topologically, residues 1369–1688 (DNFDYLTRDW…TNSSISQATN (320 aa)) are cytoplasmic. Disordered regions lie at residues 1635 to 1664 (PEPV…RLTT) and 1669 to 1688 (RVQQ…QATN). Residues 1678–1688 (DTNSSISQATN) are compositionally biased toward polar residues.

It belongs to the calcium channel alpha-1 subunit (TC 1.A.1.11) family. In terms of assembly, multisubunit complex consisting of alpha-1, alpha-2, beta and delta subunits in a 1:1:1:1 ratio. The channel activity is directed by the pore-forming and voltage-sensitive alpha-1 subunit. In many cases, this subunit is sufficient to generate voltage-sensitive calcium channel activity. The auxiliary subunits beta and alpha-2/delta linked by a disulfide bridge regulate the channel activity. An additional gamma subunit is present only in skeletal muscle L-type channel. In terms of processing, phosphorylation by PKA stimulates the calcium channel function. Skeletal muscle specific.

The protein resides in the membrane. In terms of biological role, voltage-sensitive calcium channels (VSCC) mediate the entry of calcium ions into excitable cells and are also involved in a variety of calcium-dependent processes, including muscle contraction, gene expression, cell motility, cell division and cell death. The isoform alpha-1S gives rise to L-type calcium currents. Long-lasting (L-type) calcium channels belong to the 'high-voltage activated' (HVA) group. They are blocked by dihydropyridines (DHP), phenylalkylamines, and by benzothiazepines. Calcium channels containing the alpha-1S subunit play an important role in excitation-contraction coupling in skele|tal muscle. The protein is Voltage-dependent L-type calcium channel subunit alpha-1S of Aquarana catesbeiana (American bullfrog).